The chain runs to 224 residues: Putative ankyrin repeat protein R845 (224 aa).

ANK repeat units lie at residues 1-14 (MVEY…DVRS), 15-44 (NYDH…DVSM), 46-74 (YDYI…DPRT), 75-104 (NNDK…DIRI), 105-134 (DNDS…DIRA), 136-164 (NDYS…DVRA), 165-194 (DNDY…DFRA), and 196-224 (NDCA…VCPY).

The polypeptide is Putative ankyrin repeat protein R845 (Acanthamoeba polyphaga mimivirus (APMV)).